Reading from the N-terminus, the 280-residue chain is tRNase Z TRZ1 (280 aa).

Belongs to the RNase Z family. In terms of assembly, homodimer. The cofactor is Zn(2+). Ca(2+) serves as cofactor. Mn(2+) is required as a cofactor. It depends on Mg(2+) as a cofactor.

It localises to the cytoplasm. It catalyses the reaction Endonucleolytic cleavage of RNA, removing extra 3' nucleotides from tRNA precursor, generating 3' termini of tRNAs. A 3'-hydroxy group is left at the tRNA terminus and a 5'-phosphoryl group is left at the trailer molecule.. Functionally, zinc phosphodiesterase, which displays tRNA 3'-processing endonuclease activity. Involved in tRNA maturation, by removing a 3'-trailer from precursor tRNA. Can use bis-(p-nitophenyl) phosphate (bpNPP) as substrate. Involved in the processing of small nucleolar RNAs (snoRNAs). The chain is tRNase Z TRZ1 from Arabidopsis thaliana (Mouse-ear cress).